We begin with the raw amino-acid sequence, 740 residues long: MTISNTRDITPELIEAHGLKPDEYQRILELIGREPTFTELGIFSAMWNEHCSYKSSKKWLRTLPTSGPRVIQGPGENAGVVDIGDGDCVVFKMESHNHPSYIEPYQGAATGVGGILRDVFTMGARPVAAMNALRFGEPDHPKTRHLVSGVVSGVGGYGNAFGVPTVGGEVNFDKRYNGNILVNAFAAGLARHDGIFLSEAEGVGLPVVYLGAKTSRDGVGGATMASAEFDESIEEKRPTVQVGDPFTEKCLLEACLELMASGAVIAIQDMGAAGLTCSAVEMGAKGDLGIELILDHVPVREENMTAYEMMLSESQERMLMVLKPEKEAEAQAIFRKWGLDFAIVGKTTDDLRFRVIHQGEEVANLPIKDLGDEAPEYDRPWMEPGKHAPLPASNVPQVEDYSAALLKLIGSPDLSSRRWVYEQYDTLIQGNSLQVPGGDAGVIRVEGHETKALAFSSDVTPRYCEADPFEGGKQAVAECWRNITATGAEPLASTDNLNFGNPEKPEIMGQLVKAIEGIGEACRALDFPIVSGNVSLYNETNGQAILPTPTIAGVGLLPDWSQMAKIGGMQDGDTLVLLGGDGTHLGQSVYLRDLFDRADGPAPFVDLALEKRNGEFVRSAIRNGQVTACHDLSDGGLAIAVAEMAIKSGKGATLDAGDGLPHALLFGEDQARYVISATPEMAKLIALNAEGAGVPFRILGTVGGDRLKISKNVDVSVADLTQAYEGWFPNFMNGELTGNN.

His50 is a catalytic residue. Positions 53 and 92 each coordinate ATP. Glu94 contributes to the Mg(2+) binding site. Substrate is bound by residues Ser95–His98 and Arg117. The active-site Proton acceptor is the His96. Residue Asp118 participates in Mg(2+) binding. Gln241 provides a ligand contact to substrate. A Mg(2+)-binding site is contributed by Asp269. Glu313–Gln315 is a substrate binding site. 2 residues coordinate ATP: Asp495 and Gly532. Asn533 lines the Mg(2+) pocket. Position 535 (Ser535) interacts with substrate.

It belongs to the FGAMS family. Monomer. Part of the FGAM synthase complex composed of 1 PurL, 1 PurQ and 2 PurS subunits.

The protein localises to the cytoplasm. The enzyme catalyses N(2)-formyl-N(1)-(5-phospho-beta-D-ribosyl)glycinamide + L-glutamine + ATP + H2O = 2-formamido-N(1)-(5-O-phospho-beta-D-ribosyl)acetamidine + L-glutamate + ADP + phosphate + H(+). It functions in the pathway purine metabolism; IMP biosynthesis via de novo pathway; 5-amino-1-(5-phospho-D-ribosyl)imidazole from N(2)-formyl-N(1)-(5-phospho-D-ribosyl)glycinamide: step 1/2. Functionally, part of the phosphoribosylformylglycinamidine synthase complex involved in the purines biosynthetic pathway. Catalyzes the ATP-dependent conversion of formylglycinamide ribonucleotide (FGAR) and glutamine to yield formylglycinamidine ribonucleotide (FGAM) and glutamate. The FGAM synthase complex is composed of three subunits. PurQ produces an ammonia molecule by converting glutamine to glutamate. PurL transfers the ammonia molecule to FGAR to form FGAM in an ATP-dependent manner. PurS interacts with PurQ and PurL and is thought to assist in the transfer of the ammonia molecule from PurQ to PurL. In Brucella abortus (strain S19), this protein is Phosphoribosylformylglycinamidine synthase subunit PurL.